A 67-amino-acid chain; its full sequence is ATP synthase F(0) complex subunit 8 (67 aa).

A helical membrane pass occupies residues 8 to 24; the sequence is TWFINIVSMILTLFIVF. N6-acetyllysine; alternate is present on Lys-54. Lys-54 is subject to N6-succinyllysine; alternate. Lys-57 is modified (N6-acetyllysine).

Belongs to the ATPase protein 8 family. As to quaternary structure, component of the ATP synthase complex composed at least of ATP5F1A/subunit alpha, ATP5F1B/subunit beta, ATP5MC1/subunit c (homooctomer), MT-ATP6/subunit a, MT-ATP8/subunit 8, ATP5ME/subunit e, ATP5MF/subunit f, ATP5MG/subunit g, ATP5MK/subunit k, ATP5MJ/subunit j, ATP5F1C/subunit gamma, ATP5F1D/subunit delta, ATP5F1E/subunit epsilon, ATP5PF/subunit F6, ATP5PB/subunit b, ATP5PD/subunit d, ATP5PO/subunit OSCP. ATP synthase complex consists of a soluble F(1) head domain (subunits alpha(3) and beta(3)) - the catalytic core - and a membrane F(0) domain - the membrane proton channel (subunits c, a, 8, e, f, g, k and j). These two domains are linked by a central stalk (subunits gamma, delta, and epsilon) rotating inside the F1 region and a stationary peripheral stalk (subunits F6, b, d, and OSCP). Interacts with PRICKLE3.

Its subcellular location is the mitochondrion membrane. Its function is as follows. Subunit 8, of the mitochondrial membrane ATP synthase complex (F(1)F(0) ATP synthase or Complex V) that produces ATP from ADP in the presence of a proton gradient across the membrane which is generated by electron transport complexes of the respiratory chain. ATP synthase complex consist of a soluble F(1) head domain - the catalytic core - and a membrane F(1) domain - the membrane proton channel. These two domains are linked by a central stalk rotating inside the F(1) region and a stationary peripheral stalk. During catalysis, ATP synthesis in the catalytic domain of F(1) is coupled via a rotary mechanism of the central stalk subunits to proton translocation. In vivo, can only synthesize ATP although its ATP hydrolase activity can be activated artificially in vitro. Part of the complex F(0) domain. The protein is ATP synthase F(0) complex subunit 8 of Equus asinus (Donkey).